The chain runs to 387 residues: UDP-N-acetylglucosamine--N-acetylmuramyl-(pentapeptide) pyrophosphoryl-undecaprenol N-acetylglucosamine transferase (387 aa).

Residues 1 to 22 (MSEHVRSAGPPQASTAPSGGSA) are disordered. Residues 41 to 43 (TGG), N158, R194, S222, I276, and Q321 each bind UDP-N-acetyl-alpha-D-glucosamine.

This sequence belongs to the glycosyltransferase 28 family. MurG subfamily.

The protein localises to the cell inner membrane. The enzyme catalyses di-trans,octa-cis-undecaprenyl diphospho-N-acetyl-alpha-D-muramoyl-L-alanyl-D-glutamyl-meso-2,6-diaminopimeloyl-D-alanyl-D-alanine + UDP-N-acetyl-alpha-D-glucosamine = di-trans,octa-cis-undecaprenyl diphospho-[N-acetyl-alpha-D-glucosaminyl-(1-&gt;4)]-N-acetyl-alpha-D-muramoyl-L-alanyl-D-glutamyl-meso-2,6-diaminopimeloyl-D-alanyl-D-alanine + UDP + H(+). The protein operates within cell wall biogenesis; peptidoglycan biosynthesis. Functionally, cell wall formation. Catalyzes the transfer of a GlcNAc subunit on undecaprenyl-pyrophosphoryl-MurNAc-pentapeptide (lipid intermediate I) to form undecaprenyl-pyrophosphoryl-MurNAc-(pentapeptide)GlcNAc (lipid intermediate II). The sequence is that of UDP-N-acetylglucosamine--N-acetylmuramyl-(pentapeptide) pyrophosphoryl-undecaprenol N-acetylglucosamine transferase from Polaromonas sp. (strain JS666 / ATCC BAA-500).